The chain runs to 268 residues: Ribosomal RNA small subunit methyltransferase A (268 aa).

S-adenosyl-L-methionine is bound by residues Asn-18, Leu-20, Gly-45, Glu-66, Asp-91, and Asn-112.

It belongs to the class I-like SAM-binding methyltransferase superfamily. rRNA adenine N(6)-methyltransferase family. RsmA subfamily.

It is found in the cytoplasm. The enzyme catalyses adenosine(1518)/adenosine(1519) in 16S rRNA + 4 S-adenosyl-L-methionine = N(6)-dimethyladenosine(1518)/N(6)-dimethyladenosine(1519) in 16S rRNA + 4 S-adenosyl-L-homocysteine + 4 H(+). Functionally, specifically dimethylates two adjacent adenosines (A1518 and A1519) in the loop of a conserved hairpin near the 3'-end of 16S rRNA in the 30S particle. May play a critical role in biogenesis of 30S subunits. The protein is Ribosomal RNA small subunit methyltransferase A of Shewanella oneidensis (strain ATCC 700550 / JCM 31522 / CIP 106686 / LMG 19005 / NCIMB 14063 / MR-1).